Reading from the N-terminus, the 636-residue chain is Threonine--tRNA ligase (636 aa).

The region spanning 1-63 is the TGS domain; it reads MNEINVTLPD…ADGARVEIVT (63 aa). Residues 243–534 are catalytic; that stretch reads DHRKLGRELD…LIEHFAGNFP (292 aa). Zn(2+) contacts are provided by cysteine 335, histidine 386, and histidine 511.

Belongs to the class-II aminoacyl-tRNA synthetase family. Homodimer. The cofactor is Zn(2+).

The protein resides in the cytoplasm. It catalyses the reaction tRNA(Thr) + L-threonine + ATP = L-threonyl-tRNA(Thr) + AMP + diphosphate + H(+). In terms of biological role, catalyzes the attachment of threonine to tRNA(Thr) in a two-step reaction: L-threonine is first activated by ATP to form Thr-AMP and then transferred to the acceptor end of tRNA(Thr). Also edits incorrectly charged L-seryl-tRNA(Thr). This is Threonine--tRNA ligase from Geobacter sp. (strain M21).